The following is a 102-amino-acid chain: Large ribosomal subunit protein bL21 (102 aa).

Belongs to the bacterial ribosomal protein bL21 family. Part of the 50S ribosomal subunit. Contacts protein L20.

Its function is as follows. This protein binds to 23S rRNA in the presence of protein L20. This Oleidesulfovibrio alaskensis (strain ATCC BAA-1058 / DSM 17464 / G20) (Desulfovibrio alaskensis) protein is Large ribosomal subunit protein bL21.